The following is a 464-amino-acid chain: 3-deoxy-D-manno-octulosonic acid transferase (464 aa).

A helical; Signal-anchor membrane pass occupies residues 2 to 22 (MLLYYALSFILLPVYFIIILI). The RPE1 insert domain occupies 47-93 (DSLDFMQTSANKEEFKGDTSLRTTTYTLIREDEGLGSTYKLPLEASD). Glutamate 107 serves as the catalytic Proton acceptor. CMP is bound by residues 311-312 (PR), 352-354 (FGE), and 377-380 (NILE).

It belongs to the glycosyltransferase group 1 family. Glycosyltransferase 30 subfamily.

Its subcellular location is the cell inner membrane. It catalyses the reaction lipid IVA (E. coli) + CMP-3-deoxy-beta-D-manno-octulosonate = alpha-Kdo-(2-&gt;6)-lipid IVA (E. coli) + CMP + H(+). Its pathway is bacterial outer membrane biogenesis; LPS core biosynthesis. Its function is as follows. Involved in lipopolysaccharide (LPS) biosynthesis. Catalyzes the transfer of 3-deoxy-D-manno-octulosonate (Kdo) residue(s) from CMP-Kdo to lipid IV(A), the tetraacyldisaccharide-1,4'-bisphosphate precursor of lipid A. This is 3-deoxy-D-manno-octulosonic acid transferase (waaA) from Rickettsia conorii (strain ATCC VR-613 / Malish 7).